Reading from the N-terminus, the 280-residue chain is Large ribosomal subunit protein uL2 (280 aa).

A disordered region spans residues glycine 215–lysine 280.

The protein belongs to the universal ribosomal protein uL2 family. In terms of assembly, part of the 50S ribosomal subunit. Forms a bridge to the 30S subunit in the 70S ribosome.

In terms of biological role, one of the primary rRNA binding proteins. Required for association of the 30S and 50S subunits to form the 70S ribosome, for tRNA binding and peptide bond formation. It has been suggested to have peptidyltransferase activity; this is somewhat controversial. Makes several contacts with the 16S rRNA in the 70S ribosome. This Dictyoglomus thermophilum (strain ATCC 35947 / DSM 3960 / H-6-12) protein is Large ribosomal subunit protein uL2.